Here is a 350-residue protein sequence, read N- to C-terminus: Small ribosomal subunit biogenesis GTPase RsgA (350 aa).

Residues 1 to 17 (MSKNKLSKGQQRRVNAN) show a composition bias toward polar residues. Positions 1-33 (MSKNKLSKGQQRRVNANHQRRLKTSKEKPDYDD) are disordered. One can recognise a CP-type G domain in the interval 104–273 (TSVLTRPDFY…VIDSPGVREF (170 aa)). GTP-binding positions include 160-163 (NKID) and 214-222 (GQSGVGKSS). Positions 297, 302, 304, and 310 each coordinate Zn(2+).

This sequence belongs to the TRAFAC class YlqF/YawG GTPase family. RsgA subfamily. Monomer. Associates with 30S ribosomal subunit, binds 16S rRNA. The cofactor is Zn(2+).

It is found in the cytoplasm. Its function is as follows. One of several proteins that assist in the late maturation steps of the functional core of the 30S ribosomal subunit. Helps release RbfA from mature subunits. May play a role in the assembly of ribosomal proteins into the subunit. Circularly permuted GTPase that catalyzes slow GTP hydrolysis, GTPase activity is stimulated by the 30S ribosomal subunit. This is Small ribosomal subunit biogenesis GTPase RsgA from Escherichia coli (strain ATCC 8739 / DSM 1576 / NBRC 3972 / NCIMB 8545 / WDCM 00012 / Crooks).